Consider the following 169-residue polypeptide: Cytochrome c-type biogenesis protein CcmE (169 aa).

Residues 1–7 are Cytoplasmic-facing; it reads MTRKQRR. The chain crosses the membrane as a helical; Signal-anchor for type II membrane protein span at residues 8–28; that stretch reads MTIIGGSLAVLALAAALVLNA. Over 29 to 169 the chain is Periplasmic; sequence LRDSIVFFST…AQGNPQGAVR (141 aa). The heme site is built by H122 and Y126. The segment at 143–169 is disordered; it reads DDYGGKASDGVKPAATTAQGNPQGAVR. Polar residues predominate over residues 158-169; that stretch reads TTAQGNPQGAVR.

Belongs to the CcmE/CycJ family.

It localises to the cell inner membrane. Its function is as follows. Heme chaperone required for the biogenesis of c-type cytochromes. Transiently binds heme delivered by CcmC and transfers the heme to apo-cytochromes in a process facilitated by CcmF and CcmH. The chain is Cytochrome c-type biogenesis protein CcmE from Bradyrhizobium diazoefficiens (strain JCM 10833 / BCRC 13528 / IAM 13628 / NBRC 14792 / USDA 110).